Reading from the N-terminus, the 298-residue chain is Protein OS-9 homolog (298 aa).

The N-terminal stretch at 1–25 is a signal peptide; the sequence is MGLAGGARVVLFVVAAAAAAALTAA. Asn-95 is a glycosylation site (N-linked (GlcNAc...) asparagine). The 126-residue stretch at 121-246 folds into the MRH domain; the sequence is DQCFYRHEGW…TVQSPMLCKN (126 aa). An intrachain disulfide couples Cys-123 to Cys-136. Trp-130, Trp-131, and Gln-143 together coordinate a mannooligosaccharide derivative. 2 N-linked (GlcNAc...) asparagine glycosylation sites follow: Asn-171 and Asn-197. 2 disulfide bridges follow: Cys-201–Cys-232 and Cys-216–Cys-244. A mannooligosaccharide derivative contacts are provided by Asp-202, Arg-208, Glu-228, and Tyr-234.

Belongs to the OS-9 family. In terms of assembly, interacts with HRD3.

The protein resides in the endoplasmic reticulum. Functionally, lectin which functions in endoplasmic reticulum (ER) quality control and ER-associated degradation (ERAD). May bind terminally misfolded non-glycosylated proteins as well as improperly folded glycoproteins, retain them in the ER, and possibly transfer them to the ubiquitination machinery and promote their degradation. This chain is Protein OS-9 homolog, found in Oryza sativa subsp. japonica (Rice).